A 306-amino-acid polypeptide reads, in one-letter code: Pantothenate kinase (306 aa).

91–98 (GSVAVGKS) contributes to the ATP binding site.

It belongs to the prokaryotic pantothenate kinase family.

It is found in the cytoplasm. It catalyses the reaction (R)-pantothenate + ATP = (R)-4'-phosphopantothenate + ADP + H(+). The protein operates within cofactor biosynthesis; coenzyme A biosynthesis; CoA from (R)-pantothenate: step 1/5. The sequence is that of Pantothenate kinase from Streptococcus thermophilus (strain ATCC BAA-491 / LMD-9).